The chain runs to 57 residues: Weak toxin CM-1b (57 aa).

4 disulfides stabilise this stretch: Cys3-Cys19, Cys12-Cys37, Cys40-Cys49, and Cys50-Cys55.

This sequence belongs to the three-finger toxin family. Short-chain subfamily. Orphan group XX sub-subfamily. Expressed by the venom gland.

It is found in the secreted. In Hemachatus haemachatus (Rinkhals), this protein is Weak toxin CM-1b.